Here is a 564-residue protein sequence, read N- to C-terminus: R-linalool synthase (564 aa).

Residues Asp320, Asp324, Asp464, Thr468, and Glu472 each contribute to the Mg(2+) site. Positions 320–324 (DDVYD) match the DDXXD motif motif.

It belongs to the terpene synthase family. Mg(2+) serves as cofactor. It depends on Mn(2+) as a cofactor.

The enzyme catalyses (2E)-geranyl diphosphate + H2O = (R)-linalool + diphosphate. Specifically catalyzes production of (R)-(-)-linalool, the main component of lavender essential oil. The polypeptide is R-linalool synthase (Lavandula angustifolia (Lavender)).